The following is a 214-amino-acid chain: Cytochrome b (214 aa).

Transmembrane regions (helical) follow at residues 31-51 (FGSM…FLAI), 75-96 (WIMQ…YIHI), 111-131 (WLSG…GYVL), and 176-196 (FFAL…IHIL). The heme b site is built by His-81 and His-95. Heme b is bound by residues His-180 and His-194. An a ubiquinone-binding site is contributed by His-199.

Belongs to the cytochrome b family. As to quaternary structure, the cytochrome bc1 complex contains 3 respiratory subunits (MT-CYB, CYC1 and UQCRFS1), 2 core proteins (UQCRC1 and UQCRC2) and probably 6 low-molecular weight proteins. It depends on heme b as a cofactor.

The protein resides in the mitochondrion inner membrane. Functionally, component of the ubiquinol-cytochrome c reductase complex (complex III or cytochrome b-c1 complex) that is part of the mitochondrial respiratory chain. The b-c1 complex mediates electron transfer from ubiquinol to cytochrome c. Contributes to the generation of a proton gradient across the mitochondrial membrane that is then used for ATP synthesis. The chain is Cytochrome b (MT-CYB) from Agkistrodon contortrix contortrix (Southern copperhead).